The following is a 438-amino-acid chain: Probable imidazolonepropionase (438 aa).

Residues Tyr-159 and His-192 each coordinate 4-imidazolone-5-propanoate. Tyr-159 is a binding site for N-formimidoyl-L-glutamate. His-260 provides a ligand contact to Fe(3+). Zn(2+) is bound at residue His-260. Residue Glu-263 coordinates 4-imidazolone-5-propanoate. Asp-334 contributes to the Fe(3+) binding site. Asp-334 is a Zn(2+) binding site. Asn-336 is an N-formimidoyl-L-glutamate binding site.

This sequence belongs to the metallo-dependent hydrolases superfamily. HutI family. Zn(2+) is required as a cofactor. Fe(3+) serves as cofactor.

It carries out the reaction 4-imidazolone-5-propanoate + H2O = N-formimidoyl-L-glutamate. The protein operates within amino-acid degradation; L-histidine degradation into L-glutamate; N-formimidoyl-L-glutamate from L-histidine: step 3/3. This is Probable imidazolonepropionase (amdhd1) from Xenopus laevis (African clawed frog).